We begin with the raw amino-acid sequence, 162 residues long: Transcription elongation factor GreA (162 aa).

Residues 45 to 74 (ENAEYEAAREKQAFIEGRIKELEDMTARAE) are a coiled coil.

It belongs to the GreA/GreB family.

In terms of biological role, necessary for efficient RNA polymerase transcription elongation past template-encoded arresting sites. The arresting sites in DNA have the property of trapping a certain fraction of elongating RNA polymerases that pass through, resulting in locked ternary complexes. Cleavage of the nascent transcript by cleavage factors such as GreA or GreB allows the resumption of elongation from the new 3'terminus. GreA releases sequences of 2 to 3 nucleotides. In Rickettsia conorii (strain ATCC VR-613 / Malish 7), this protein is Transcription elongation factor GreA.